Here is a 626-residue protein sequence, read N- to C-terminus: tRNA uridine 5-carboxymethylaminomethyl modification enzyme MnmG (626 aa).

G13–G18 is an FAD binding site. An NAD(+)-binding site is contributed by G273–F287.

It belongs to the MnmG family. As to quaternary structure, homodimer. Heterotetramer of two MnmE and two MnmG subunits. It depends on FAD as a cofactor.

The protein resides in the cytoplasm. Its function is as follows. NAD-binding protein involved in the addition of a carboxymethylaminomethyl (cmnm) group at the wobble position (U34) of certain tRNAs, forming tRNA-cmnm(5)s(2)U34. The sequence is that of tRNA uridine 5-carboxymethylaminomethyl modification enzyme MnmG from Acinetobacter baumannii (strain AB307-0294).